The chain runs to 389 residues: Large envelope protein (389 aa).

Methionine 1 carries the post-translational modification N-acetylmethionine. A lipid anchor (N-myristoyl glycine; by host) is attached at glycine 2. Positions 2–108 are pre-S1; sequence GTNLSVPNPL…PPLRDSHPQA (107 aa). Residues 2 to 163 form a pre-S region; the sequence is GTNLSVPNPL…SARTGDPVTI (162 aa). The Virion surface; in external conformation portion of the chain corresponds to 2-170; the sequence is GTNLSVPNPL…VTIMENITSG (169 aa). The Intravirion; in internal conformation segment spans residues 2–242; sequence GTNLSVPNPL…PGYRWMCLRR (241 aa). The span at 77–95 shows a compositional bias: polar residues; that stretch reads VSTIPPPASTNRQSGRQPT. A disordered region spans residues 77-103; that stretch reads VSTIPPPASTNRQSGRQPTPISPPLRD. The tract at residues 109–163 is pre-S2; it reads MQWNSTALHQALQDPRVRGLYLPAGGSSSGTVNPAPNIASHISSISARTGDPVTI. A helical transmembrane segment spans residues 171–191; it reads FLGPLLVLQAGFFLLTRILTI. Residues 192-242 lie on the Intravirion; in external conformation side of the membrane; the sequence is PQSLDSWWTSLNFLGGSPVCLGQNSQSPTSNHSPTSCPPICPGYRWMCLRR. The helical transmembrane segment at 243-263 threads the bilayer; it reads FIIFLFILLLCLIFLLVLLDY. Residues 264-337 are Virion surface-facing; that stretch reads QGMLPVCPLI…WASVRFSWLS (74 aa). N-linked (GlcNAc...) asparagine; by host glycosylation occurs at asparagine 309. The helical transmembrane segment at 338-358 threads the bilayer; the sequence is LLVPFVQWFVGLSPTVWLSAI. Residues 359 to 364 are Intravirion-facing; it reads WMMWYW. A helical membrane pass occupies residues 365-387; sequence GPSLYSIVSPFIPLLPIFFCLWV. The Virion surface segment spans residues 388 to 389; it reads YI.

It belongs to the orthohepadnavirus major surface antigen family. As to quaternary structure, in its internal form (Li-HBsAg), interacts with the capsid protein and with the isoform S. Interacts with host chaperone CANX. In terms of assembly, associates with host chaperone CANX through its pre-S2 N glycan; this association may be essential for isoform M proper secretion. Interacts with isoform L. Interacts with the antigens of satellite virus HDV (HDVAgs); this interaction is required for encapsidation of HDV genomic RNA. In terms of processing, isoform M is N-terminally acetylated by host at a ratio of 90%, and N-glycosylated by host at the pre-S2 region. Myristoylated.

Its subcellular location is the virion membrane. The large envelope protein exists in two topological conformations, one which is termed 'external' or Le-HBsAg and the other 'internal' or Li-HBsAg. In its external conformation the protein attaches the virus to cell receptors and thereby initiating infection. This interaction determines the species specificity and liver tropism. This attachment induces virion internalization predominantly through caveolin-mediated endocytosis. The large envelope protein also assures fusion between virion membrane and endosomal membrane. In its internal conformation the protein plays a role in virion morphogenesis and mediates the contact with the nucleocapsid like a matrix protein. Its function is as follows. The middle envelope protein plays an important role in the budding of the virion. It is involved in the induction of budding in a nucleocapsid independent way. In this process the majority of envelope proteins bud to form subviral lipoprotein particles of 22 nm of diameter that do not contain a nucleocapsid. This Hepatitis B virus genotype A2 subtype adw (isolate Japan/Nishioka/1983) (HBV-A) protein is Large envelope protein.